The sequence spans 368 residues: Flagellar P-ring protein (368 aa).

An N-terminal signal peptide occupies residues 1–24; it reads MNSIFRKIVFAAFLLLALPQFALA.

This sequence belongs to the FlgI family. The basal body constitutes a major portion of the flagellar organelle and consists of four rings (L,P,S, and M) mounted on a central rod.

The protein localises to the periplasm. It is found in the bacterial flagellum basal body. Assembles around the rod to form the L-ring and probably protects the motor/basal body from shearing forces during rotation. The polypeptide is Flagellar P-ring protein (Geotalea uraniireducens (strain Rf4) (Geobacter uraniireducens)).